We begin with the raw amino-acid sequence, 244 residues long: DNA repair protein RecO (244 aa).

This sequence belongs to the RecO family.

In terms of biological role, involved in DNA repair and RecF pathway recombination. The polypeptide is DNA repair protein RecO (Koribacter versatilis (strain Ellin345)).